A 127-amino-acid polypeptide reads, in one-letter code: UPF0102 protein Gura_3756 (127 aa).

The protein belongs to the UPF0102 family.

This Geotalea uraniireducens (strain Rf4) (Geobacter uraniireducens) protein is UPF0102 protein Gura_3756.